Reading from the N-terminus, the 932-residue chain is Protocadherin gamma-A12 (932 aa).

A signal peptide spans 1–29 (MIPARLHRDYKGLVLLGILLGTLWETGCT). Cadherin domains are found at residues 30 to 133 (QIRY…APYF), 134 to 242 (RESE…APAF), 243 to 347 (AQPE…APEV), 348 to 452 (VLTS…PPVF), 453 to 562 (PQAS…APEI), and 570 to 683 (DGST…SPAN). At 30–692 (QIRYSVPEEL…NSETSDLTLY (663 aa)) the chain is on the extracellular side. 3 N-linked (GlcNAc...) asparagine glycosylation sites follow: Asn265, Asn419, and Asn545. Residues 693–713 (LVVAVAAVSCVFLAFVILLLA) form a helical membrane-spanning segment. Topologically, residues 714-932 (LRLRRWHKSR…KKKSGKKEKK (219 aa)) are cytoplasmic. Disordered regions lie at residues 803-841 (SHGL…WPNN) and 902-932 (ATLT…KEKK). Positions 816–841 (WRFSQAQRPGTSGSQNGDDTGTWPNN) are enriched in polar residues. Residues 922 to 932 (NKKKSGKKEKK) are compositionally biased toward basic residues.

The protein localises to the cell membrane. Its function is as follows. Potential calcium-dependent cell-adhesion protein. May be involved in the establishment and maintenance of specific neuronal connections in the brain. The polypeptide is Protocadherin gamma-A12 (PCDHGA12) (Homo sapiens (Human)).